Reading from the N-terminus, the 372-residue chain is Cobalt-precorrin-5B C(1)-methyltransferase (372 aa).

The protein belongs to the CbiD family.

The catalysed reaction is Co-precorrin-5B + S-adenosyl-L-methionine = Co-precorrin-6A + S-adenosyl-L-homocysteine. Its pathway is cofactor biosynthesis; adenosylcobalamin biosynthesis; cob(II)yrinate a,c-diamide from sirohydrochlorin (anaerobic route): step 6/10. In terms of biological role, catalyzes the methylation of C-1 in cobalt-precorrin-5B to form cobalt-precorrin-6A. This chain is Cobalt-precorrin-5B C(1)-methyltransferase, found in Prochlorococcus marinus subsp. pastoris (strain CCMP1986 / NIES-2087 / MED4).